A 914-amino-acid polypeptide reads, in one-letter code: MDGHSNFTQPSDTSHASHTIPSSSSSQRRRLTKKPPPSTSARHHHSSLSIDSRVDAQSLVGKRSSTSLRRAPSAPPARTPTSTHASNSSSPRNPSSSTRLNNHSPIIPAASEFAASSLSPSARDRDSDPARNDHGHQLQNNNNYYYSAFTNAHHHNQYSAASHRRSNSYGHPHGPQSSNSLTFNHSEDFIGAPFDGSAILNRIEATKASPTLGSGAFPHISNPIPVGAAAPAQYSRGSPALEQSFTFPSAAMSEKSQQVRGMEAQLPTSKRYSDETKEPKPGVLRKKSGFSGFMSGLVGTPKKPLISAPENPVHVTHVGYDSATGQFTGLPKEWQRLISESGITEKERRENPETLVNVIKFYKETTEKPAEDQVLEKFHDARPGLPSAPSAGSMISPGLAPHHYNPMSPMISPPASPRFPQVGHEGNFENPRSPPPVPKNKDVTLMPSRPAPRPPVSLPTRTAPHAPYAAKDSGIDMPPQHDDLTPTTYQPPKESQPILPEEHRSRSNSRVNGNTAYPASQQSPAVQAAYQQQLMQQQQEQALAQAQASMSGSMSRAPSKRQPQAQQPTPPQSQHQYSRPTDANGAQQTQRPQQPQIGPVPQSRPRHRSRQSNGLDVVAALKRICSEGDPREIYRSFTKIGQGASGGVYTGHERGSNRLVAIKQMNLEQQPKKDLIINEILVMKDSSHPNIVNFIDSYLCGGELWVVMEFMEGGSLTDVVTFNIMTEGQIASVCRETLLGLQHLHSKGVIHRDIKSDNILLSMEGNIKLTDFGFCATINEAQNKRTTMVGTPYWMAPEVVTRKEYGRKVDIWSLGIMAIEMIEGEPPYLTESPLRALWLIATNGTPQIKDEGNMSPVFRDFLYFALKVDPDKRASAHDLLRHEFMNLCVDLSHLSPLVRAAREARAQEKARKGQ.

The span at 1–12 (MDGHSNFTQPSD) shows a compositional bias: polar residues. Disordered regions lie at residues 1–140 (MDGH…QLQN), 156–184 (NQYS…LTFN), and 251–286 (AMSE…VLRK). Composition is skewed to low complexity over residues 13–26 (TSHA…SSSS), 63–72 (RSSTSLRRAP), and 79–97 (TPTS…PSSS). The span at 122–136 (ARDRDSDPARNDHGH) shows a compositional bias: basic and acidic residues. Basic residues predominate over residues 156-166 (NQYSAASHRRS). Polar residues predominate over residues 175 to 184 (PQSSNSLTFN). Basic and acidic residues predominate over residues 271–280 (RYSDETKEPK). Residues 306–319 (ISAPENPVHVTHVG) enclose the CRIB domain. Positions 408-615 (SPMISPPASP…RHRSRQSNGL (208 aa)) are disordered. Low complexity-rich tracts occupy residues 516–548 (AYPA…QAQA) and 562–576 (QPQA…SQHQ). The segment covering 577-586 (YSRPTDANGA) has biased composition (polar residues). Low complexity predominate over residues 587–596 (QQTQRPQQPQ). In terms of domain architecture, Protein kinase spans 634–885 (YRSFTKIGQG…AHDLLRHEFM (252 aa)). ATP-binding positions include 640-648 (IGQGASGGV) and Lys663. Asp753 (proton acceptor) is an active-site residue.

Belongs to the protein kinase superfamily. STE Ser/Thr protein kinase family. STE20 subfamily.

It is found in the cytoplasm. The protein localises to the nucleus. The enzyme catalyses L-seryl-[protein] + ATP = O-phospho-L-seryl-[protein] + ADP + H(+). It catalyses the reaction L-threonyl-[protein] + ATP = O-phospho-L-threonyl-[protein] + ADP + H(+). MAP4K component of the MAPK pathway required for the mating pheromone response and the regulation of cell polarity and cell cycle. Phosphorylates histone H2B to form H2BS10ph. Is involved in conidiation, aerial hyphal growth and infection-related morphogenesis. The polypeptide is Serine/threonine-protein kinase MST20 (MST20) (Pyricularia oryzae (strain 70-15 / ATCC MYA-4617 / FGSC 8958) (Rice blast fungus)).